Consider the following 83-residue polypeptide: Short neurotoxin D (83 aa).

An N-terminal signal peptide occupies residues 1–21 (MKTLLLTLVVVTMVCLDLGYT). 4 cysteine pairs are disulfide-bonded: Cys-24-Cys-45, Cys-38-Cys-62, Cys-64-Cys-75, and Cys-76-Cys-81.

It belongs to the three-finger toxin family. Short-chain subfamily. Type I alpha-neurotoxin sub-subfamily. Expressed by the venom gland.

The protein localises to the secreted. Binds to muscle nicotinic acetylcholine receptor (nAChR) and inhibit acetylcholine from binding to the receptor, thereby impairing neuromuscular transmission. The chain is Short neurotoxin D from Laticauda colubrina (Yellow-lipped sea krait).